The chain runs to 647 residues: Methyl-accepting chemotaxis protein McpK (647 aa).

Residues 1–16 are Cytoplasmic-facing; it reads MYDWWVLQLAKLSVSR. Residues 17 to 37 form a helical membrane-spanning segment; it reads KLMVGFGVLLALLLLVVISSN. At 38 to 291 the chain is on the periplasmic side; that stretch reads RTLTHQTALS…LRESTASRDR (254 aa). Positions 45 to 287 constitute an HBM domain; that stretch reads ALSEQLAEVA…AGRQLRESTA (243 aa). Residues 292-312 form a helical membrane-spanning segment; that stretch reads ASLWLIAALALAFGCVAGWAI. The Cytoplasmic segment spans residues 313–647; sequence NRQIVRPLDE…LQAQVGRFRL (335 aa). Positions 314–370 constitute an HAMP domain; the sequence is RQIVRPLDEALAQAEAIAAGDLGKRPQNPLTLQRRDELGQLQRVMQRMGDSLRELVG. A Methyl-accepting transducer domain is found at 375-611; it reads GVSQLASSAE…EINRSVLSVR (237 aa).

It belongs to the methyl-accepting chemotaxis (MCP) protein family. In terms of assembly, ligand free ligand-binding domain (LBD) is present in a monomer-dimer equilibrium. AlphaKG binding stabilizes the homodimer.

It localises to the cell inner membrane. In terms of biological role, chemotactic-signal transducers respond to changes in the concentration of attractants and repellents in the environment, transduce a signal from the outside to the inside of the cell, and facilitate sensory adaptation through the variation of the level of methylation. McpK is a chemoreceptor that specifically binds and mediates chemotaxis to alpha-ketoglutarate (alphaKG). In Pseudomonas aeruginosa (strain ATCC 15692 / DSM 22644 / CIP 104116 / JCM 14847 / LMG 12228 / 1C / PRS 101 / PAO1), this protein is Methyl-accepting chemotaxis protein McpK.